We begin with the raw amino-acid sequence, 529 residues long: Bifunctional purine biosynthesis protein PurH (529 aa).

An MGS-like domain is found at 1 to 148 (MQQRRPVRRA…KNHKDVAIVV (148 aa)). N6-acetyllysine is present on Lys287.

The protein belongs to the PurH family.

It catalyses the reaction (6R)-10-formyltetrahydrofolate + 5-amino-1-(5-phospho-beta-D-ribosyl)imidazole-4-carboxamide = 5-formamido-1-(5-phospho-D-ribosyl)imidazole-4-carboxamide + (6S)-5,6,7,8-tetrahydrofolate. The enzyme catalyses IMP + H2O = 5-formamido-1-(5-phospho-D-ribosyl)imidazole-4-carboxamide. The protein operates within purine metabolism; IMP biosynthesis via de novo pathway; 5-formamido-1-(5-phospho-D-ribosyl)imidazole-4-carboxamide from 5-amino-1-(5-phospho-D-ribosyl)imidazole-4-carboxamide (10-formyl THF route): step 1/1. It participates in purine metabolism; IMP biosynthesis via de novo pathway; IMP from 5-formamido-1-(5-phospho-D-ribosyl)imidazole-4-carboxamide: step 1/1. The protein is Bifunctional purine biosynthesis protein PurH of Escherichia coli O127:H6 (strain E2348/69 / EPEC).